Reading from the N-terminus, the 112-residue chain is Diuretic hormone class 2 (112 aa).

The signal sequence occupies residues 1–24 (MVRATCLLASCVLFALLLIVPASA). The propeptide occupies 25–71 (YPRYPSNYFREEGQYEPEEIMDMLNRLGNLIQMERKMENYKEDITSE). At proline 104 the chain carries Proline amide. Residues 108-112 (RRDAH) constitute a propeptide that is removed on maturation.

Expressed in corpora cardiaca (CC), corpora allata (CA), antennal lobe (AL) and gnathal ganglion (GNG) (at protein level). Expression in CC, CA and AL detected in most animals, expression in GNG in few animals (at protein level).

It localises to the secreted. Regulation of fluid secretion. Stimulates Malpighian tubule fluid secretion. This Agrotis ipsilon (Black cutworm moth) protein is Diuretic hormone class 2.